The sequence spans 524 residues: MDSLMLAYLFPISVASIIAFVFLYNLFSSRTLKNKKIRTAPMATGAWPVLGHLHLFGSGELPHKMLAAMADKYGSAFRMKFGKHTTLVVSDTRIVKECFTTNDTLFSNRPSTKAFQLMTYDNESVAFTPYGSYWREIRKISTLKLLSNHRLQAIKDVRASEVNVCFKTLYDQCKNPSGSAPILIDMKKWFEEVSNNVVMRVIVGRQNFGSKIVQGEEEAIHYKKVMDELLRLASLSMFSDFAPLLGFVDIFQGNLSAMKRNAKKVDAILENWLEEHRKKKNSVAESQQDFMDVMLSIVEESKLSGHDADAVIKATCLAMIMGGTDTTAVSLTWIISLLMNNRHALKKAREELDALVGKDRQVEDSDLKNLVYMNAIVKETMRMYPLGTLLERETKEDCEIDGFHVKGGTRLLVNVWKLQRDPNVWVDPTEFRPERFLTENADIDVGGQHFELLPFGAGRRVCPGVXFALQFMHLVLARLIHGYDLNTLNEENVDLTESPEGHVNHKASPLDLILTPRLHYKLYE.

The next 3 membrane-spanning stretches (helical) occupy residues 4–24 (LMLA…VFLY), 232–252 (LASL…DIFQ), and 319–339 (MIMG…SLLM). C462 provides a ligand contact to heme.

Belongs to the cytochrome P450 family. Requires heme as cofactor.

The protein resides in the endoplasmic reticulum membrane. It carries out the reaction protopine + reduced [NADPH--hemoprotein reductase] + O2 = 6-hydroxyprotopine + oxidized [NADPH--hemoprotein reductase] + H2O + H(+). Its pathway is alkaloid biosynthesis. Catalyzes the conversion of protopine and allocryptopine to dihydrosanguinarine and dihydrochelerythrine, respectively, in the biosynthesis of isoquinoline alkaloid sanguinarine. The chain is Protopine 6-monooxygenase (CYP82N2v2) from Eschscholzia californica (California poppy).